A 404-amino-acid chain; its full sequence is Glucose-1-phosphate adenylyltransferase (404 aa).

Residues Y99, G164, 179-180 (EK), and S197 each bind alpha-D-glucose 1-phosphate.

Belongs to the bacterial/plant glucose-1-phosphate adenylyltransferase family.

It catalyses the reaction alpha-D-glucose 1-phosphate + ATP + H(+) = ADP-alpha-D-glucose + diphosphate. It functions in the pathway glycan biosynthesis; glycogen biosynthesis. Involved in the biosynthesis of ADP-glucose, a building block, required in the biosynthesis of maltose-1-phosphate (M1P) and in the elongation reactions to produce linear alpha-1,4-glucans. Catalyzes the reaction between ATP and alpha-D-glucose 1-phosphate (G1P) to produce pyrophosphate and ADP-Glc. The chain is Glucose-1-phosphate adenylyltransferase from Mycolicibacterium gilvum (strain PYR-GCK) (Mycobacterium gilvum (strain PYR-GCK)).